The primary structure comprises 615 residues: Dihydroxy-acid dehydratase (615 aa).

Asp-81 lines the Mg(2+) pocket. [2Fe-2S] cluster is bound at residue Cys-122. Asp-123 and Lys-124 together coordinate Mg(2+). Residue Lys-124 is modified to N6-carboxylysine. Cys-193 provides a ligand contact to [2Fe-2S] cluster. Mg(2+) is bound at residue Glu-489. Ser-515 serves as the catalytic Proton acceptor.

This sequence belongs to the IlvD/Edd family. As to quaternary structure, homodimer. Requires [2Fe-2S] cluster as cofactor. Mg(2+) serves as cofactor.

The enzyme catalyses (2R)-2,3-dihydroxy-3-methylbutanoate = 3-methyl-2-oxobutanoate + H2O. It carries out the reaction (2R,3R)-2,3-dihydroxy-3-methylpentanoate = (S)-3-methyl-2-oxopentanoate + H2O. It functions in the pathway amino-acid biosynthesis; L-isoleucine biosynthesis; L-isoleucine from 2-oxobutanoate: step 3/4. Its pathway is amino-acid biosynthesis; L-valine biosynthesis; L-valine from pyruvate: step 3/4. Functions in the biosynthesis of branched-chain amino acids. Catalyzes the dehydration of (2R,3R)-2,3-dihydroxy-3-methylpentanoate (2,3-dihydroxy-3-methylvalerate) into 2-oxo-3-methylpentanoate (2-oxo-3-methylvalerate) and of (2R)-2,3-dihydroxy-3-methylbutanoate (2,3-dihydroxyisovalerate) into 2-oxo-3-methylbutanoate (2-oxoisovalerate), the penultimate precursor to L-isoleucine and L-valine, respectively. The chain is Dihydroxy-acid dehydratase from Pseudomonas savastanoi pv. phaseolicola (strain 1448A / Race 6) (Pseudomonas syringae pv. phaseolicola (strain 1448A / Race 6)).